Here is a 459-residue protein sequence, read N- to C-terminus: UDP-N-acetylmuramoylalanine--D-glutamate ligase (459 aa).

119 to 125 (GTNGKTT) serves as a coordination point for ATP.

This sequence belongs to the MurCDEF family.

The protein localises to the cytoplasm. The catalysed reaction is UDP-N-acetyl-alpha-D-muramoyl-L-alanine + D-glutamate + ATP = UDP-N-acetyl-alpha-D-muramoyl-L-alanyl-D-glutamate + ADP + phosphate + H(+). It functions in the pathway cell wall biogenesis; peptidoglycan biosynthesis. Functionally, cell wall formation. Catalyzes the addition of glutamate to the nucleotide precursor UDP-N-acetylmuramoyl-L-alanine (UMA). The chain is UDP-N-acetylmuramoylalanine--D-glutamate ligase from Lacticaseibacillus casei (strain BL23) (Lactobacillus casei).